We begin with the raw amino-acid sequence, 162 residues long: Transcriptional repressor NrdR (162 aa).

The segment at 3-34 (CPFCQFEGLKVTDSRDAMEMNAIRRRRECLNC) is a zinc-finger region. An ATP-cone domain is found at 48-138 (VQVQKRDGTY…VYKRFKDLGE (91 aa)).

Belongs to the NrdR family. Zn(2+) is required as a cofactor.

In terms of biological role, negatively regulates transcription of bacterial ribonucleotide reductase nrd genes and operons by binding to NrdR-boxes. This chain is Transcriptional repressor NrdR, found in Protochlamydia amoebophila (strain UWE25).